Consider the following 273-residue polypeptide: MTVLHSIDFFSSSSAPVAIEARAPQSAFPEHHHDFYEIVIVEEGAGVHVFNGNPYTLSRGCVCFVRDHDRHLFESTDDLFLTNVLFRAPDAFRFLSGVGHFLPRECDGVYPSHWRVNGQVLQQIKCLIACLEHAPKSDRVEDIALHESVFMQLLVKLWQGCQTQAGDDQEGRLYQLLDWLQNNYSEAVEWPELADRFALPLRTLHRQLKNKTGMTPQRYLTRLRLLQARHQLCYSDNSVTDIAYLCGFGDSNHFSTLFKREFSQSPRDLRSQL.

Residues 174-272 form the HTH araC/xylS-type domain; it reads YQLLDWLQNN…SQSPRDLRSQ (99 aa). DNA-binding regions (H-T-H motif) lie at residues 191–212 and 239–262; these read PELA…KNKT and VTDI…KREF.

As to quaternary structure, binds DNA as a dimer.

It is found in the cytoplasm. Functionally, activates expression of the rhaBAD and rhaT operons. This Yersinia pseudotuberculosis serotype I (strain IP32953) protein is HTH-type transcriptional activator RhaS.